The primary structure comprises 507 residues: MNRAFCLLARSRRFPRVPSAGAVLSGEAATLPRCAPNVVRMASQNSFRIEYDTFGELKVPTDKYYGAQTVRSTMNFKIGGATERMPIPVIKAFGILKRAAAEVNQEYGLDPKIASAIMKAADEVAEGKLNDHFPLVVWQTGSGTQTNMNVNEVISNRAIEMLGGELGSKKPVHPNDHVNKSQSSNDTFPTAMHIAAALEVHQVLLPGLQKLHDALSAKSKEFAQVIKIGRTHTQDAVPLTLGQEFSGYVQQVQYAMERIKAAMPRIYELAAGGTAVGTGLNTRIGFAEKVAAKVAALTGLPFVTAPNKFEALAAHDALVELSGAMNTTACSLMKIANDIRFLGSGPRSGLGELILPENEPGSSIMPGKVNPTQCEAMTMVAAQVMGNHVAVTVGGSNGHFELNVFKPMMIKNVLHSARLLGDASVSFTENCVVGIQANTERINKLMNESLMLVTALNPHIGYDKAAKIAKTAHKNGSTLKETAIELGYLTAEQFDEWVKPKDMLGPK.

The transit peptide at 1–41 (MNRAFCLLARSRRFPRVPSAGAVLSGEAATLPRCAPNVVRM) directs the protein to the mitochondrion. Lysine 58, lysine 63, and lysine 77 each carry N6-acetyllysine; alternate. Residues lysine 58, lysine 63, and lysine 77 each carry the N6-succinyllysine; alternate modification. Threonine 82 carries the post-translational modification Phosphothreonine. Lysine 91 bears the N6-acetyllysine mark. N6-acetyllysine; alternate is present on residues lysine 112 and lysine 119. N6-succinyllysine; alternate is present on residues lysine 112 and lysine 119. Substrate is bound by residues 142 to 144 (SGT), 173 to 176 (HPND), and 183 to 185 (SSN). Lysine 210 is modified (N6-acetyllysine). Residue lysine 220 is modified to N6-acetyllysine; alternate. At lysine 220 the chain carries N6-succinyllysine; alternate. Residue threonine 231 participates in substrate binding. Residue histidine 232 is the Proton donor/acceptor of the active site. Threonine 233 carries the phosphothreonine modification. Lysine 289 is modified (N6-acetyllysine; alternate). Lysine 289 carries the N6-succinyllysine; alternate modification. Serine 362 is a catalytic residue. Substrate-binding positions include serine 363 and 368 to 370 (KVN). Serine 363 bears the Phosphoserine mark. 2 positions are modified to N6-succinyllysine: lysine 464 and lysine 470. Lysine 499 carries the post-translational modification N6-acetyllysine.

This sequence belongs to the class-II fumarase/aspartase family. Fumarase subfamily. Homotetramer. Interacts with H2AZ1. In terms of processing, phosphorylation at Thr-233 by PRKDC in response to DNA damage promotes translocation to the nucleus and recruitment to DNA double-strand breaks (DSBs).

The protein localises to the mitochondrion. It localises to the cytoplasm. Its subcellular location is the cytosol. The protein resides in the nucleus. It is found in the chromosome. It catalyses the reaction (S)-malate = fumarate + H2O. Its pathway is carbohydrate metabolism; tricarboxylic acid cycle; (S)-malate from fumarate: step 1/1. Its function is as follows. Catalyzes the reversible stereospecific interconversion of fumarate to L-malate. Experiments in other species have demonstrated that specific isoforms of this protein act in defined pathways and favor one direction over the other. Functionally, catalyzes the hydration of fumarate to L-malate in the tricarboxylic acid (TCA) cycle to facilitate a transition step in the production of energy in the form of NADH. Catalyzes the dehydration of L-malate to fumarate. Fumarate metabolism in the cytosol plays a role during urea cycle and arginine metabolism; fumarate being a by-product of the urea cycle and amino-acid catabolism. Also plays a role in DNA repair by promoting non-homologous end-joining (NHEJ). In response to DNA damage and phosphorylation by PRKDC, translocates to the nucleus and accumulates at DNA double-strand breaks (DSBs): acts by catalyzing formation of fumarate, an inhibitor of KDM2B histone demethylase activity, resulting in enhanced dimethylation of histone H3 'Lys-36' (H3K36me2). The sequence is that of Fumarate hydratase, mitochondrial from Rattus norvegicus (Rat).